The sequence spans 187 residues: Oleosin Zm-II (187 aa).

Alanine 2 carries the post-translational modification N-acetylalanine. Residues 2 to 51 (ADRDRSGIYGGAHATYGQQQQQGGGGRPMGEQVKKGMLHDKGPTASQALT) are polar. Positions 17 to 42 (YGQQQQQGGGGRPMGEQVKKGMLHDK) are disordered. Positions 33–42 (QVKKGMLHDK) are enriched in basic and acidic residues. Transmembrane regions (helical) follow at residues 50 to 70 (LTVATLFPLGGLLLVLSGLAL), 83 to 103 (VFLIFSPVLVPAALLIGTAVM), and 104 to 124 (GFLTSGALGLGGLSSLTCLAN). The hydrophobic stretch occupies residues 52 to 123 (VATLFPLGGL…GGLSSLTCLA (72 aa)). The segment covering 155–169 (TAQAGQAIQGRAQEA) has biased composition (low complexity). Residues 155 to 187 (TAQAGQAIQGRAQEAGTGGGAGAGAGGGGRASS) are disordered. The span at 170–187 (GTGGGAGAGAGGGGRASS) shows a compositional bias: gly residues.

This sequence belongs to the oleosin family. The N-terminus is blocked. In terms of tissue distribution, found in embryonic axis, scutellum, and aleurone layer.

The protein resides in the lipid droplet. The protein localises to the membrane. Functionally, may have a structural role to stabilize the lipid body during desiccation of the seed by preventing coalescence of the oil. Probably interacts with both lipid and phospholipid moieties of lipid bodies. May also provide recognition signals for specific lipase anchorage in lipolysis during seedling growth. The protein is Oleosin Zm-II (OLE18) of Zea mays (Maize).